The chain runs to 271 residues: MPKTKKAKDEKSAKKDKKHIAGDEKGLDFARAWVEFPDPADDEQVFRCDLTWLTSRWNCIFGSGCQGIQAGRADDGCCSLGAHFSDEDDEKRVAGHVARLTPDIWQHHAEGTRNGWTSEDDEGSRQTRPFQGSCIFQNRPGFAGGAGCSLHILALKEGREPLETKPDVCWQLPVRRTYEWIDRPDDTRVLQVSIGEYDRRGWGPGGHDLHWWCTSATSAHGAGDPVYVSYRPELVELMGKAGYDRLVELCEERLASQLPLLAPHPADPAGR.

2 disordered regions span residues 1-21 and 109-130; these read MPKT…KHIA and AEGT…TRPF. The segment covering 7–21 has biased composition (basic and acidic residues); that stretch reads AKDEKSAKKDKKHIA.

It belongs to the Rv0495c family.

Essential for maintaining intracellular redox homeostasis. In Streptomyces coelicolor (strain ATCC BAA-471 / A3(2) / M145), this protein is Probable redox regulatory protein SCO3349.